Here is a 261-residue protein sequence, read N- to C-terminus: Protein TfpB (261 aa).

This chain is Protein TfpB (tfpB), found in Moraxella bovis.